The chain runs to 480 residues: UDP-N-acetylmuramoylalanine--D-glutamate ligase (480 aa).

127-133 (GTNGKTT) contributes to the ATP binding site.

This sequence belongs to the MurCDEF family.

It is found in the cytoplasm. It catalyses the reaction UDP-N-acetyl-alpha-D-muramoyl-L-alanine + D-glutamate + ATP = UDP-N-acetyl-alpha-D-muramoyl-L-alanyl-D-glutamate + ADP + phosphate + H(+). It functions in the pathway cell wall biogenesis; peptidoglycan biosynthesis. Its function is as follows. Cell wall formation. Catalyzes the addition of glutamate to the nucleotide precursor UDP-N-acetylmuramoyl-L-alanine (UMA). The polypeptide is UDP-N-acetylmuramoylalanine--D-glutamate ligase (Tropheryma whipplei (strain TW08/27) (Whipple's bacillus)).